Consider the following 156-residue polypeptide: 6,7-dimethyl-8-ribityllumazine synthase (156 aa).

5-amino-6-(D-ribitylamino)uracil is bound by residues phenylalanine 22, 57–59 (AYE), and 81–83 (TVI). 86–87 (GT) is a binding site for (2S)-2-hydroxy-3-oxobutyl phosphate. The Proton donor role is filled by histidine 89. A 5-amino-6-(D-ribitylamino)uracil-binding site is contributed by phenylalanine 114. Arginine 128 is a binding site for (2S)-2-hydroxy-3-oxobutyl phosphate.

This sequence belongs to the DMRL synthase family. In terms of assembly, forms an icosahedral capsid composed of 60 subunits, arranged as a dodecamer of pentamers.

It catalyses the reaction (2S)-2-hydroxy-3-oxobutyl phosphate + 5-amino-6-(D-ribitylamino)uracil = 6,7-dimethyl-8-(1-D-ribityl)lumazine + phosphate + 2 H2O + H(+). The protein operates within cofactor biosynthesis; riboflavin biosynthesis; riboflavin from 2-hydroxy-3-oxobutyl phosphate and 5-amino-6-(D-ribitylamino)uracil: step 1/2. Functionally, catalyzes the formation of 6,7-dimethyl-8-ribityllumazine by condensation of 5-amino-6-(D-ribitylamino)uracil with 3,4-dihydroxy-2-butanone 4-phosphate. This is the penultimate step in the biosynthesis of riboflavin. This Cronobacter sakazakii (strain ATCC BAA-894) (Enterobacter sakazakii) protein is 6,7-dimethyl-8-ribityllumazine synthase.